Consider the following 81-residue polypeptide: Toxin TdNa10 (81 aa).

A signal peptide spans 1–20; it reads MWTFAIVLAFLLIGLDEGEA. The 61-residue stretch at 21-81 folds into the LCN-type CS-alpha/beta domain; sequence LDGYPLSKNN…KMYPGELPCH (61 aa). 4 disulfide bridges follow: Cys-32–Cys-80, Cys-36–Cys-57, Cys-42–Cys-62, and Cys-46–Cys-64.

Belongs to the long (4 C-C) scorpion toxin superfamily. Sodium channel inhibitor family. Beta subfamily. As to expression, expressed by the venom gland.

The protein localises to the secreted. In terms of biological role, alpha toxins bind voltage-independently at site-3 of sodium channels (Nav) and inhibit the inactivation of the activated channels, thereby blocking neuronal transmission. This toxin binds, in vitro, to sodium channels and inhibits the inactivation of the activated channels. Seems not toxic to mice, crickets and sweet-water shrimps. The protein is Toxin TdNa10 of Tityus discrepans (Venezuelan scorpion).